The following is a 97-amino-acid chain: Co-chaperonin GroES (97 aa).

Belongs to the GroES chaperonin family. As to quaternary structure, heptamer of 7 subunits arranged in a ring. Interacts with the chaperonin GroEL.

The protein resides in the cytoplasm. Together with the chaperonin GroEL, plays an essential role in assisting protein folding. The GroEL-GroES system forms a nano-cage that allows encapsulation of the non-native substrate proteins and provides a physical environment optimized to promote and accelerate protein folding. GroES binds to the apical surface of the GroEL ring, thereby capping the opening of the GroEL channel. The protein is Co-chaperonin GroES of Arthrobacter sp. (strain FB24).